Consider the following 113-residue polypeptide: Ribonuclease P protein component (113 aa).

It belongs to the RnpA family. As to quaternary structure, consists of a catalytic RNA component (M1 or rnpB) and a protein subunit.

It catalyses the reaction Endonucleolytic cleavage of RNA, removing 5'-extranucleotides from tRNA precursor.. Its function is as follows. RNaseP catalyzes the removal of the 5'-leader sequence from pre-tRNA to produce the mature 5'-terminus. It can also cleave other RNA substrates such as 4.5S RNA. The protein component plays an auxiliary but essential role in vivo by binding to the 5'-leader sequence and broadening the substrate specificity of the ribozyme. This is Ribonuclease P protein component from Clavibacter michiganensis subsp. michiganensis (strain NCPPB 382).